Consider the following 190-residue polypeptide: Hypoxanthine/guanine phosphoribosyltransferase (190 aa).

It belongs to the purine/pyrimidine phosphoribosyltransferase family. Archaeal HPRT subfamily. Homodimer.

It localises to the cytoplasm. It catalyses the reaction IMP + diphosphate = hypoxanthine + 5-phospho-alpha-D-ribose 1-diphosphate. The catalysed reaction is GMP + diphosphate = guanine + 5-phospho-alpha-D-ribose 1-diphosphate. It functions in the pathway purine metabolism; IMP biosynthesis via salvage pathway; IMP from hypoxanthine: step 1/1. In terms of biological role, catalyzes a salvage reaction resulting in the formation of IMP that is energically less costly than de novo synthesis. In Methanohalophilus mahii (strain ATCC 35705 / DSM 5219 / SLP), this protein is Hypoxanthine/guanine phosphoribosyltransferase.